The chain runs to 1284 residues: ABC multidrug transporter atrC (1284 aa).

Basic and acidic residues predominate over residues 1 to 11; it reads MKSTAESKETP. The interval 1–24 is disordered; it reads MKSTAESKETPSQDESTTSVPCTE. 6 helical membrane passes run 55–75, 99–119, 178–198, 203–223, 282–302, and 320–340; these read AVAILAACASGAGIALQNLIF, AAELALYFVYLGIARLVLSYT, IGLLFQGLAAFVTAFIIAFVV, TLICICIPVATIGTTGVVAAV, LLGLLFSAEYTIIYLGYGLAF, and IFTVLLSVVIASINLTLLAPY. The region spanning 55–346 is the ABC transmembrane type-1 1 domain; it reads AVAILAACAS…LAPYSIEFSR (292 aa). In terms of domain architecture, ABC transporter 1 spans 381–626; it reads VELENVTFSY…DGVYAGLVKI (246 aa). N-linked (GlcNAc...) asparagine glycans are attached at residues Asn385 and Asn401. 416–423 provides a ligand contact to ATP; that stretch reads GQSGSGKS. Residues Asn488 and Asn632 are each glycosylated (N-linked (GlcNAc...) asparagine). Helical transmembrane passes span 705-725 and 745-765; these read LVVLLGCLGGCAMYPGQAILM and FYASMLIVLAAGCLICYLAVG. Residues 705-992 enclose the ABC transmembrane type-1 2 domain; sequence LVVLLGCLGG…LFQWSTSITK (288 aa). Residue Asn800 is glycosylated (N-linked (GlcNAc...) asparagine). A run of 4 helical transmembrane segments spans residues 824 to 844, 846 to 866, 931 to 951, and 955 to 975; these read IALVVIAVLQVVTCGILAIAF, WKLGLVVVFGGIPPLVGAGMV, MICFGLTQCIEYWFQALGFWY, and LVSLGETSMYSFFVAFLSVFF. An N-linked (GlcNAc...) asparagine glycan is attached at Asn995. Residues 1027 to 1280 enclose the ABC transporter 2 domain; the sequence is IAMDNVRFSY…GGLYRRMCEA (254 aa). Residue 1062–1069 participates in ATP binding; the sequence is GSSGCGKS. N-linked (GlcNAc...) asparagine glycosylation is present at Asn1122.

It belongs to the ABC transporter superfamily. ABCB family. Multidrug resistance exporter (TC 3.A.1.201) subfamily.

Its subcellular location is the cell membrane. Its function is as follows. Pleiotropic ABC efflux transporter involved in the protection of the cells against a wide range of toxic compounds. The chain is ABC multidrug transporter atrC from Emericella nidulans (strain FGSC A4 / ATCC 38163 / CBS 112.46 / NRRL 194 / M139) (Aspergillus nidulans).